The chain runs to 240 residues: Uridylate kinase (240 aa).

Residue 13 to 16 coordinates ATP; it reads KLSG. The segment at 21–26 is involved in allosteric activation by GTP; that stretch reads GEKGFG. A UMP-binding site is contributed by G55. Residues G56 and R60 each coordinate ATP. Residues D75 and 136–143 each bind UMP; that span reads IGNPYFST. Positions 164, 170, and 173 each coordinate ATP.

This sequence belongs to the UMP kinase family. In terms of assembly, homohexamer.

Its subcellular location is the cytoplasm. It carries out the reaction UMP + ATP = UDP + ADP. It functions in the pathway pyrimidine metabolism; CTP biosynthesis via de novo pathway; UDP from UMP (UMPK route): step 1/1. Allosterically activated by GTP. Inhibited by UTP. Its function is as follows. Catalyzes the reversible phosphorylation of UMP to UDP. The protein is Uridylate kinase of Staphylococcus aureus (strain Newman).